We begin with the raw amino-acid sequence, 370 residues long: Chorismate synthase (370 aa).

Arginine 47 contributes to the NADP(+) binding site. Residues 124–126 (RSS), glycine 286, 301–305 (KPTAT), and arginine 327 contribute to the FMN site.

This sequence belongs to the chorismate synthase family. As to quaternary structure, homotetramer. The cofactor is FMNH2.

It carries out the reaction 5-O-(1-carboxyvinyl)-3-phosphoshikimate = chorismate + phosphate. The protein operates within metabolic intermediate biosynthesis; chorismate biosynthesis; chorismate from D-erythrose 4-phosphate and phosphoenolpyruvate: step 7/7. In terms of biological role, catalyzes the anti-1,4-elimination of the C-3 phosphate and the C-6 proR hydrogen from 5-enolpyruvylshikimate-3-phosphate (EPSP) to yield chorismate, which is the branch point compound that serves as the starting substrate for the three terminal pathways of aromatic amino acid biosynthesis. This reaction introduces a second double bond into the aromatic ring system. The polypeptide is Chorismate synthase (Trichodesmium erythraeum (strain IMS101)).